A 93-amino-acid chain; its full sequence is Consomatin G2 (93 aa).

The N-terminal stretch at 1 to 18 (MQTAYWVMLMMMVCITAP) is a signal peptide. Positions 19–69 (LPEGGKPNSGIRGLVPNDLTPQHTLRSLISRRQTDVLLDATLLTTPAPEQR) are excised as a propeptide. Cys72 and Cys77 are disulfide-bonded. Residue Trp74 is modified to D-tryptophan. A propeptide spanning residues 79 to 93 (WRPYPWRRRDLNGKR) is cleaved from the precursor.

The protein belongs to the conotoxin C superfamily. Consomatin family. In terms of tissue distribution, expressed by the venom duct.

Its subcellular location is the secreted. Its function is as follows. Moderately activates human somatostatin receptors (SSTR) with a preferential activation of SSTR1 and SSTR4. In vivo, does not cause behavioral changes in mice within a few minutes of intracranial injection, but causes a progressive loss of movement thereafter. Four to five hours after injection, mice recover, even with the highest dose tested. Shows antinociception and antihyperalgesia activities in two mouse models of acute pain, most probably by acting outside the central nervous system. In Conus geographus (Geography cone), this protein is Consomatin G2.